A 250-amino-acid polypeptide reads, in one-letter code: Membrane-spanning 4-domains subfamily A member 8 (250 aa).

Residues 1–74 are Cytoplasmic-facing; the sequence is MNSMTSAVPV…ALKEGKTLGA (74 aa). Residues 75-95 traverse the membrane as a helical segment; that stretch reads IQIIIGLAHIGLGSIMATVLV. The Extracellular portion of the chain corresponds to 96–98; that stretch reads GEY. A helical membrane pass occupies residues 99-119; the sequence is LSISFYGGFPFWGGLWFIISG. The Cytoplasmic portion of the chain corresponds to 120–136; it reads SLSVAAENQPYSYCLLS. Residues 137 to 157 form a helical membrane-spanning segment; that stretch reads GSLGLNIVSAICSAVGVILFI. The Extracellular segment spans residues 158-180; it reads TDLSIPHPYAYPDYYPYAWGVNP. The chain crosses the membrane as a helical span at residues 181–201; sequence GMAISGVLLVFCLLEFGIACA. The Cytoplasmic segment spans residues 202-250; the sequence is SSHFGCQLVCCQSSNVSVIYPNIYAANPVITPEPVTSPPSYSSEIQANK.

The protein belongs to the MS4A family. Expressed by hematopoietic tissues and cells lines.

Its subcellular location is the membrane. Functionally, may be involved in signal transduction as a component of a multimeric receptor complex. This is Membrane-spanning 4-domains subfamily A member 8 (MS4A8) from Homo sapiens (Human).